The primary structure comprises 587 residues: Pyruvate decarboxylase 3 (587 aa).

Residues Asp48 and His135 each contribute to the substrate site. Residues 415–496 (DSWFNCQKLR…FLINNGGYTI (82 aa)) form a thiamine pyrophosphate binding region. Mg(2+) is bound by residues Asp464, Asn491, and Gly493. Glu497 contributes to the substrate binding site.

It belongs to the TPP enzyme family. Homotetramer. The cofactor is a metal cation. Requires thiamine diphosphate as cofactor.

The catalysed reaction is a 2-oxocarboxylate + H(+) = an aldehyde + CO2. In Oryza sativa subsp. indica (Rice), this protein is Pyruvate decarboxylase 3 (PDC3).